We begin with the raw amino-acid sequence, 390 residues long: Deoxyhypusine synthase-like protein (390 aa).

The protein belongs to the deoxyhypusine synthase family.

The chain is Deoxyhypusine synthase-like protein from Nostoc punctiforme (strain ATCC 29133 / PCC 73102).